We begin with the raw amino-acid sequence, 186 residues long: Elongation factor P (186 aa).

The protein belongs to the elongation factor P family.

The protein resides in the cytoplasm. The protein operates within protein biosynthesis; polypeptide chain elongation. Its function is as follows. Involved in peptide bond synthesis. Stimulates efficient translation and peptide-bond synthesis on native or reconstituted 70S ribosomes in vitro. Probably functions indirectly by altering the affinity of the ribosome for aminoacyl-tRNA, thus increasing their reactivity as acceptors for peptidyl transferase. The polypeptide is Elongation factor P (Synechococcus sp. (strain CC9902)).